The primary structure comprises 180 residues: Acireductone dioxygenase (180 aa).

Fe(2+) is bound by residues histidine 97, histidine 99, glutamate 103, and histidine 141. Residues histidine 97, histidine 99, glutamate 103, and histidine 141 each coordinate Ni(2+).

The protein belongs to the acireductone dioxygenase (ARD) family. Monomer. Fe(2+) serves as cofactor. Requires Ni(2+) as cofactor.

The catalysed reaction is 1,2-dihydroxy-5-(methylsulfanyl)pent-1-en-3-one + O2 = 3-(methylsulfanyl)propanoate + CO + formate + 2 H(+). It catalyses the reaction 1,2-dihydroxy-5-(methylsulfanyl)pent-1-en-3-one + O2 = 4-methylsulfanyl-2-oxobutanoate + formate + 2 H(+). It participates in amino-acid biosynthesis; L-methionine biosynthesis via salvage pathway; L-methionine from S-methyl-5-thio-alpha-D-ribose 1-phosphate: step 5/6. In terms of biological role, catalyzes 2 different reactions between oxygen and the acireductone 1,2-dihydroxy-3-keto-5-methylthiopentene (DHK-MTPene) depending upon the metal bound in the active site. Fe-containing acireductone dioxygenase (Fe-ARD) produces formate and 2-keto-4-methylthiobutyrate (KMTB), the alpha-ketoacid precursor of methionine in the methionine recycle pathway. Ni-containing acireductone dioxygenase (Ni-ARD) produces methylthiopropionate, carbon monoxide and formate, and does not lie on the methionine recycle pathway. This is Acireductone dioxygenase from Serratia proteamaculans (strain 568).